Reading from the N-terminus, the 136-residue chain is Small integral membrane protein 23 (136 aa).

Over 1–31 the chain is Cytoplasmic; sequence MTIQKTGCRGREAAEVVEQRRRSHHCDDRKQ. The helical; Signal-anchor for type II membrane protein transmembrane segment at 32 to 52 threads the bilayer; that stretch reads TLLALLILVLYLGMGISGSSW. Topologically, residues 53–136 are extracellular; sequence EVSGQTKDCN…DLRPEDPCFT (84 aa). A coiled-coil region spans residues 92–124; the sequence is LKINLHGFLEKLEKEVRELEQLVRDLEFWLDAL.

Its subcellular location is the membrane. The protein is Small integral membrane protein 23 (Smim23) of Mus musculus (Mouse).